The following is a 394-amino-acid chain: Probable peptidoglycan glycosyltransferase FtsW (394 aa).

The Cytoplasmic portion of the chain corresponds to 1–27 (MEFLQNIKKNYDEWTRITPQGLLYDRA). Residues 28–48 (LFWLFVILLLIGLVAVTSASI) form a helical membrane-spanning segment. The Periplasmic portion of the chain corresponds to 49–66 (PYSSRLFNDPFYFAKRDA). Residues 67 to 87 (IYVLLSLLTCYISLQISSSQW) traverse the membrane as a helical segment. At 88 to 93 (EKWHAK) the chain is on the cytoplasmic side. A helical transmembrane segment spans residues 94–114 (IFLFSVILLLLVPFIGTSVNG). The Periplasmic portion of the chain corresponds to 115-120 (AKRWIS). Residues 121-141 (LGILNFQPAEFAKLALTCFLA) form a helical membrane-spanning segment. Residues 142–155 (SYFTRRYDEVRSRH) are Cytoplasmic-facing. The next 2 membrane-spanning stretches (helical) occupy residues 156 to 176 (VSIFKPFIVMLVLGCFLLLQP) and 177 to 197 (DLGSTVVLFIIMSGMLFIVGA). Position 198 (Lys-198) is a topological domain, cytoplasmic. A helical membrane pass occupies residues 199 to 219 (ILQFVGLIALGGILFVWLVLT). Residues 220-277 (ASYRLKRFIGFLEPFKEPYGTGFQLTNSLIAFGRGEITGEGLGNSIQKLDYLPEAHTD) lie on the Periplasmic side of the membrane. The chain crosses the membrane as a helical span at residues 278–298 (FIMAIIGEEFGFIGILIVILL). The Cytoplasmic portion of the chain corresponds to 299-322 (LGLLIFRAMKIGRESLMLEQRFRG). A helical transmembrane segment spans residues 323–343 (FFALGIGFWIFFQGFVNLGMA). The Periplasmic segment spans residues 344 to 353 (LGMLPTKGLT). The chain crosses the membrane as a helical span at residues 354–374 (FPLVSYGGSSIIIMSATIGIL). Residues 375-394 (LRIDHENRLFRIGQARLRDD) lie on the Cytoplasmic side of the membrane.

Belongs to the SEDS family. FtsW subfamily.

It is found in the cell inner membrane. The catalysed reaction is [GlcNAc-(1-&gt;4)-Mur2Ac(oyl-L-Ala-gamma-D-Glu-L-Lys-D-Ala-D-Ala)](n)-di-trans,octa-cis-undecaprenyl diphosphate + beta-D-GlcNAc-(1-&gt;4)-Mur2Ac(oyl-L-Ala-gamma-D-Glu-L-Lys-D-Ala-D-Ala)-di-trans,octa-cis-undecaprenyl diphosphate = [GlcNAc-(1-&gt;4)-Mur2Ac(oyl-L-Ala-gamma-D-Glu-L-Lys-D-Ala-D-Ala)](n+1)-di-trans,octa-cis-undecaprenyl diphosphate + di-trans,octa-cis-undecaprenyl diphosphate + H(+). Its pathway is cell wall biogenesis; peptidoglycan biosynthesis. Functionally, peptidoglycan polymerase that is essential for cell division. This chain is Probable peptidoglycan glycosyltransferase FtsW, found in Haemophilus influenzae (strain ATCC 51907 / DSM 11121 / KW20 / Rd).